We begin with the raw amino-acid sequence, 784 residues long: Ubiquitin carboxyl-terminal hydrolase 1 (784 aa).

Disordered regions lie at residues methionine 1–asparagine 21 and threonine 33–glycine 54. Positions serine 7–serine 16 are enriched in polar residues. A phosphoserine mark is found at serine 16, serine 42, and serine 67. Positions valine 81–leucine 784 constitute a USP domain. Cysteine 90 (nucleophile) is an active-site residue. Composition is skewed to basic and acidic residues over residues lysine 232–threonine 243 and aspartate 252–leucine 264. Disordered stretches follow at residues lysine 232–tryptophan 341 and threonine 363–alanine 411. A compositionally biased stretch (polar residues) spans asparagine 389–aspartate 407. Position 475 is a phosphoserine (serine 475). Residue histidine 593 is the Proton acceptor of the active site. Positions proline 686–isoleucine 723 are disordered. Residues phenylalanine 694–glutamine 709 show a composition bias toward polar residues. Serine 767 is subject to Phosphoserine.

It belongs to the peptidase C19 family. In terms of assembly, interacts with FANCD2 and PCNA. Interacts with WDR48. Interacts with ATAD5; the interaction regulates USP1-mediated PCNA deubiquitination. Post-translationally, autocatalytic cleavage of USP1 following UV irradiation inactivates it, leading to an increase in ubiquitinated PCNA, recruitment of POLH and translesion synthesis. In terms of processing, ubiquitinated by the CRL2(KLHDC2) complex following autocatalytic cleavage, leading to its degradation: the CRL2(KLHDC2) complex recognizes the diglycine (Gly-Gly) at the C-terminus.

Its subcellular location is the nucleus. The enzyme catalyses Thiol-dependent hydrolysis of ester, thioester, amide, peptide and isopeptide bonds formed by the C-terminal Gly of ubiquitin (a 76-residue protein attached to proteins as an intracellular targeting signal).. Functionally, negative regulator of DNA damage repair which specifically deubiquitinates monoubiquitinated FANCD2. Also involved in PCNA-mediated translesion synthesis (TLS) by deubiquitinating monoubiquitinated PCNA. Has almost no deubiquitinating activity by itself and requires the interaction with WDR48 to have a high activity. In Rattus norvegicus (Rat), this protein is Ubiquitin carboxyl-terminal hydrolase 1.